Reading from the N-terminus, the 442-residue chain is Trigger factor (442 aa).

Residues 162–247 (GDTVTIDYKG…IHEVKSKQLP (86 aa)) enclose the PPIase FKBP-type domain.

Belongs to the FKBP-type PPIase family. Tig subfamily.

It localises to the cytoplasm. The catalysed reaction is [protein]-peptidylproline (omega=180) = [protein]-peptidylproline (omega=0). Its function is as follows. Involved in protein export. Acts as a chaperone by maintaining the newly synthesized protein in an open conformation. Functions as a peptidyl-prolyl cis-trans isomerase. The sequence is that of Trigger factor from Lactobacillus acidophilus (strain ATCC 700396 / NCK56 / N2 / NCFM).